A 684-amino-acid polypeptide reads, in one-letter code: DNA ligase (684 aa).

NAD(+) is bound by residues 46 to 50 (DYVYD), 100 to 101 (SL), and Glu130. Residue Lys132 is the N6-AMP-lysine intermediate of the active site. Positions 153, 187, 303, and 327 each coordinate NAD(+). Zn(2+) contacts are provided by Cys421, Cys424, Cys439, and Cys444. The BRCT domain maps to 604–684 (DEKNYFFNKR…DFINLSNAKK (81 aa)).

It belongs to the NAD-dependent DNA ligase family. LigA subfamily. It depends on Mg(2+) as a cofactor. The cofactor is Mn(2+).

The catalysed reaction is NAD(+) + (deoxyribonucleotide)n-3'-hydroxyl + 5'-phospho-(deoxyribonucleotide)m = (deoxyribonucleotide)n+m + AMP + beta-nicotinamide D-nucleotide.. DNA ligase that catalyzes the formation of phosphodiester linkages between 5'-phosphoryl and 3'-hydroxyl groups in double-stranded DNA using NAD as a coenzyme and as the energy source for the reaction. It is essential for DNA replication and repair of damaged DNA. The polypeptide is DNA ligase (Oenococcus oeni (strain ATCC BAA-331 / PSU-1)).